The following is a 450-amino-acid chain: Tubulin alpha-3 chain (450 aa).

Residues Gln-11, Glu-71, Gly-144, Thr-145, Thr-179, Asn-206, and Asn-228 each contribute to the GTP site. Glu-71 contacts Mg(2+). Residue Glu-254 is part of the active site.

Belongs to the tubulin family. Dimer of alpha and beta chains. A typical microtubule is a hollow water-filled tube with an outer diameter of 25 nm and an inner diameter of 15 nM. Alpha-beta heterodimers associate head-to-tail to form protofilaments running lengthwise along the microtubule wall with the beta-tubulin subunit facing the microtubule plus end conferring a structural polarity. Microtubules usually have 13 protofilaments but different protofilament numbers can be found in some organisms and specialized cells. Requires Mg(2+) as cofactor. Undergoes a tyrosination/detyrosination cycle, the cyclic removal and re-addition of a C-terminal tyrosine residue by the enzymes tubulin tyrosine carboxypeptidase (TTCP) and tubulin tyrosine ligase (TTL), respectively.

The protein resides in the cytoplasm. It localises to the cytoskeleton. It catalyses the reaction GTP + H2O = GDP + phosphate + H(+). Functionally, tubulin is the major constituent of microtubules, a cylinder consisting of laterally associated linear protofilaments composed of alpha- and beta-tubulin heterodimers. Microtubules grow by the addition of GTP-tubulin dimers to the microtubule end, where a stabilizing cap forms. Below the cap, tubulin dimers are in GDP-bound state, owing to GTPase activity of alpha-tubulin. The protein is Tubulin alpha-3 chain (TUBA3) of Eleusine indica (Goosegrass).